A 325-amino-acid chain; its full sequence is UPF0285 protein MMP0642 (325 aa).

The protein belongs to the UPF0285 family.

This is UPF0285 protein MMP0642 from Methanococcus maripaludis (strain DSM 14266 / JCM 13030 / NBRC 101832 / S2 / LL).